The primary structure comprises 215 residues: Adenylate kinase (215 aa).

Gly-10–Thr-15 is a binding site for ATP. An NMP region spans residues Ser-30–Val-59. Residues Thr-31, Arg-36, Lys-57–Val-59, Gly-85–Arg-88, and Gln-92 contribute to the AMP site. The LID stretch occupies residues Gly-126–Asp-163. Arg-127 provides a ligand contact to ATP. Residues Cys-130 and Cys-133 each contribute to the Zn(2+) site. ATP is bound at residue Ser-136–Tyr-137. Zn(2+)-binding residues include Cys-150 and Cys-153. AMP-binding residues include Arg-160 and Arg-171. Position 199 (Leu-199) interacts with ATP.

This sequence belongs to the adenylate kinase family. In terms of assembly, monomer.

The protein resides in the cytoplasm. It catalyses the reaction AMP + ATP = 2 ADP. It functions in the pathway purine metabolism; AMP biosynthesis via salvage pathway; AMP from ADP: step 1/1. In terms of biological role, catalyzes the reversible transfer of the terminal phosphate group between ATP and AMP. Plays an important role in cellular energy homeostasis and in adenine nucleotide metabolism. The sequence is that of Adenylate kinase from Finegoldia magna (strain ATCC 29328 / DSM 20472 / WAL 2508) (Peptostreptococcus magnus).